Reading from the N-terminus, the 494-residue chain is Ubiquitin carboxyl-terminal hydrolase 27 (494 aa).

Residues leucine 30–phenylalanine 50 traverse the membrane as a helical segment. Residues proline 74–leucine 494 form the USP domain. Cysteine 83 (nucleophile) is an active-site residue. Histidine 440 (proton acceptor) is an active-site residue.

This sequence belongs to the peptidase C19 family.

The protein localises to the membrane. It catalyses the reaction Thiol-dependent hydrolysis of ester, thioester, amide, peptide and isopeptide bonds formed by the C-terminal Gly of ubiquitin (a 76-residue protein attached to proteins as an intracellular targeting signal).. In terms of biological role, recognizes and hydrolyzes the peptide bond at the C-terminal Gly of ubiquitin. Involved in the processing of poly-ubiquitin precursors as well as that of ubiquitinated proteins. The protein is Ubiquitin carboxyl-terminal hydrolase 27 (UBP27) of Arabidopsis thaliana (Mouse-ear cress).